A 343-amino-acid polypeptide reads, in one-letter code: 3-dehydroquinate synthase (343 aa).

NAD(+)-binding positions include 61–66 (SGEKYK), 95–99 (GVISD), 119–120 (TT), lysine 132, lysine 141, and 159–162 (FLKT). Zn(2+) contacts are provided by glutamate 174, histidine 231, and histidine 248.

The protein belongs to the sugar phosphate cyclases superfamily. Dehydroquinate synthase family. Requires Co(2+) as cofactor. Zn(2+) is required as a cofactor. NAD(+) serves as cofactor.

The protein localises to the cytoplasm. The enzyme catalyses 7-phospho-2-dehydro-3-deoxy-D-arabino-heptonate = 3-dehydroquinate + phosphate. It participates in metabolic intermediate biosynthesis; chorismate biosynthesis; chorismate from D-erythrose 4-phosphate and phosphoenolpyruvate: step 2/7. Functionally, catalyzes the conversion of 3-deoxy-D-arabino-heptulosonate 7-phosphate (DAHP) to dehydroquinate (DHQ). This is 3-dehydroquinate synthase from Helicobacter pylori (strain HPAG1).